A 279-amino-acid chain; its full sequence is tRNA (guanine-N(1)-)-methyltransferase (279 aa).

S-adenosyl-L-methionine contacts are provided by residues Gly117 and 141–146; that span reads LGDYVL. Positions 256–279 are disordered; the sequence is WTPDGSGFRAGGDPVADSSDTNEP.

This sequence belongs to the RNA methyltransferase TrmD family. In terms of assembly, homodimer.

The protein resides in the cytoplasm. The catalysed reaction is guanosine(37) in tRNA + S-adenosyl-L-methionine = N(1)-methylguanosine(37) in tRNA + S-adenosyl-L-homocysteine + H(+). Functionally, specifically methylates guanosine-37 in various tRNAs. In Kineococcus radiotolerans (strain ATCC BAA-149 / DSM 14245 / SRS30216), this protein is tRNA (guanine-N(1)-)-methyltransferase.